The primary structure comprises 396 residues: Phosphopentomutase (396 aa).

6 residues coordinate Mn(2+): Asp-14, Asp-286, His-291, Asp-327, His-328, and His-339.

The protein belongs to the phosphopentomutase family. The cofactor is Mn(2+).

The protein resides in the cytoplasm. The enzyme catalyses 2-deoxy-alpha-D-ribose 1-phosphate = 2-deoxy-D-ribose 5-phosphate. It carries out the reaction alpha-D-ribose 1-phosphate = D-ribose 5-phosphate. Its pathway is carbohydrate degradation; 2-deoxy-D-ribose 1-phosphate degradation; D-glyceraldehyde 3-phosphate and acetaldehyde from 2-deoxy-alpha-D-ribose 1-phosphate: step 1/2. Functionally, isomerase that catalyzes the conversion of deoxy-ribose 1-phosphate (dRib-1-P) and ribose 1-phosphate (Rib-1-P) to deoxy-ribose 5-phosphate (dRib-5-P) and ribose 5-phosphate (Rib-5-P), respectively. This chain is Phosphopentomutase, found in Staphylococcus epidermidis (strain ATCC 35984 / DSM 28319 / BCRC 17069 / CCUG 31568 / BM 3577 / RP62A).